A 295-amino-acid polypeptide reads, in one-letter code: uncharacterized protein (295 aa).

The protein localises to the plastid. It localises to the chloroplast. This is an uncharacterized protein from Euglena gracilis.